Here is a 176-residue protein sequence, read N- to C-terminus: MSSKQEPVVLGKLGSSHGIKGWLKITTYTDSVEGIFDYSPWLIKEQGEWREVKVLQWRFQGKAVVACLEGVETREHAQMLTNCEIAVTPEQMDTLPEDEFYWRDLIGCEVMNTKGYNMGKVQEIVETGSNDVLLVKANAKDGFGKAERMIPFVTEQFIIEVNLTEKQITVDWDPDF.

The PRC barrel domain occupies 97 to 176 (EDEFYWRDLI…QITVDWDPDF (80 aa)).

The protein belongs to the RimM family. In terms of assembly, binds ribosomal protein uS19.

The protein resides in the cytoplasm. An accessory protein needed during the final step in the assembly of 30S ribosomal subunit, possibly for assembly of the head region. Essential for efficient processing of 16S rRNA. May be needed both before and after RbfA during the maturation of 16S rRNA. It has affinity for free ribosomal 30S subunits but not for 70S ribosomes. The chain is Ribosome maturation factor RimM from Shewanella sediminis (strain HAW-EB3).